We begin with the raw amino-acid sequence, 322 residues long: Ubiquitin-conjugating enzyme E2 U (322 aa).

The UBC core domain maps to 4–153; sequence RAYLLLQRDF…LKLFNRPLQM (150 aa). Residue Cys-89 is the Glycyl thioester intermediate of the active site.

This sequence belongs to the ubiquitin-conjugating enzyme family. Autoubiquitinated in vitro in the presence of UBR5.

It carries out the reaction S-ubiquitinyl-[E1 ubiquitin-activating enzyme]-L-cysteine + [E2 ubiquitin-conjugating enzyme]-L-cysteine = [E1 ubiquitin-activating enzyme]-L-cysteine + S-ubiquitinyl-[E2 ubiquitin-conjugating enzyme]-L-cysteine.. It functions in the pathway protein modification; protein ubiquitination. In terms of biological role, catalyzes the covalent attachment of ubiquitin to other proteins. The sequence is that of Ubiquitin-conjugating enzyme E2 U (UBE2U) from Macaca fascicularis (Crab-eating macaque).